Consider the following 359-residue polypeptide: Diacyltrehalose acyltransferase Chp2 (359 aa).

A helical transmembrane segment spans residues 4 to 24 (VIAGAFAVWLVGWAGGFGTAI). Positions 79 to 316 (PNAKHDLIDY…VLQPQIDAAY (238 aa)) constitute a PE-PPE domain.

This sequence belongs to the mycobacterial PPE family.

The protein localises to the cell inner membrane. With respect to regulation, activity is probably potentiated by the DAT/PAT transporter MmpL10. Inhibited by the lipase inhibitor tetrahydrolipstatin (THL). Involved in the final steps of polyacyltrehalose (PAT) biosynthesis. Catalyzes the transfer of three mycolipenoyl groups onto diacyltrehalose (DAT) to form PAT. This chain is Diacyltrehalose acyltransferase Chp2, found in Mycobacterium tuberculosis (strain ATCC 25618 / H37Rv).